Here is a 231-residue protein sequence, read N- to C-terminus: Urease accessory protein UreF (231 aa).

It belongs to the UreF family. In terms of assembly, ureD, UreF and UreG form a complex that acts as a GTP-hydrolysis-dependent molecular chaperone, activating the urease apoprotein by helping to assemble the nickel containing metallocenter of UreC. The UreE protein probably delivers the nickel.

Its subcellular location is the cytoplasm. Functionally, required for maturation of urease via the functional incorporation of the urease nickel metallocenter. The sequence is that of Urease accessory protein UreF from Marinobacter nauticus (strain ATCC 700491 / DSM 11845 / VT8) (Marinobacter aquaeolei).